A 626-amino-acid chain; its full sequence is Probable potassium transport system protein Kup (626 aa).

A run of 13 helical transmembrane segments spans residues 8–28 (VALP…IGTS), 44–64 (ISEA…TLSI), 102–122 (IYLI…GIIT), 139–159 (PAFD…LFMV), 171–191 (FGPI…YSII), 196–216 (ILWF…PFVA), 217–237 (FVAM…YADM), 249–269 (WFIV…ALLL), 281–301 (LLVP…AAVI), 339–359 (IYVP…IILF), 377–397 (MLCV…WPWW), 399–419 (VTLF…STSL), and 421–441 (ILSG…ILMT).

Belongs to the HAK/KUP transporter (TC 2.A.72) family.

Its subcellular location is the cell inner membrane. The catalysed reaction is K(+)(in) + H(+)(in) = K(+)(out) + H(+)(out). Functionally, transport of potassium into the cell. Likely operates as a K(+):H(+) symporter. In Acinetobacter baylyi (strain ATCC 33305 / BD413 / ADP1), this protein is Probable potassium transport system protein Kup.